A 308-amino-acid polypeptide reads, in one-letter code: Putative transposon Ty5-1 protein YCL074W (308 aa).

This Saccharomyces cerevisiae (strain ATCC 204508 / S288c) (Baker's yeast) protein is Putative transposon Ty5-1 protein YCL074W (TY5A).